The sequence spans 132 residues: D-ribose pyranase (132 aa).

Catalysis depends on H20, which acts as the Proton donor. Residues D28, H99, and 121–123 (YSN) each bind substrate.

This sequence belongs to the RbsD / FucU family. RbsD subfamily. Homodecamer.

It is found in the cytoplasm. The catalysed reaction is beta-D-ribopyranose = beta-D-ribofuranose. It participates in carbohydrate metabolism; D-ribose degradation; D-ribose 5-phosphate from beta-D-ribopyranose: step 1/2. In terms of biological role, catalyzes the interconversion of beta-pyran and beta-furan forms of D-ribose. The polypeptide is D-ribose pyranase (Streptococcus uberis (strain ATCC BAA-854 / 0140J)).